Reading from the N-terminus, the 209-residue chain is ATP synthase subunit b 2 (209 aa).

A helical membrane pass occupies residues W9 to F29.

This sequence belongs to the ATPase B chain family. F-type ATPases have 2 components, F(1) - the catalytic core - and F(0) - the membrane proton channel. F(1) has five subunits: alpha(3), beta(3), gamma(1), delta(1), epsilon(1). F(0) has three main subunits: a(1), b(2) and c(10-14). The alpha and beta chains form an alternating ring which encloses part of the gamma chain. F(1) is attached to F(0) by a central stalk formed by the gamma and epsilon chains, while a peripheral stalk is formed by the delta and b chains.

The protein resides in the cell inner membrane. In terms of biological role, f(1)F(0) ATP synthase produces ATP from ADP in the presence of a proton or sodium gradient. F-type ATPases consist of two structural domains, F(1) containing the extramembraneous catalytic core and F(0) containing the membrane proton channel, linked together by a central stalk and a peripheral stalk. During catalysis, ATP synthesis in the catalytic domain of F(1) is coupled via a rotary mechanism of the central stalk subunits to proton translocation. Component of the F(0) channel, it forms part of the peripheral stalk, linking F(1) to F(0). The chain is ATP synthase subunit b 2 from Desulfosudis oleivorans (strain DSM 6200 / JCM 39069 / Hxd3) (Desulfococcus oleovorans).